The primary structure comprises 131 residues: MCSARKLLRGGAGSAGGECDEDGAAPAGRVEEPEHGASPRRRRPQDEGEQDIEEPQNHSGEPIGDDYKKMGTLFGELNKNLLNMGFTRMYFGERIVEPVVVLFFWLMLWFLGLQALGLVAVLCLVIIYVQQ.

Residues 1–67 (MCSARKLLRG…HSGEPIGDDY (67 aa)) are disordered. S14 is modified (phosphoserine). Residues 99 to 119 (VVVLFFWLMLWFLGLQALGLV) form a helical membrane-spanning segment.

It belongs to the FAM241 family.

The protein resides in the membrane. This is an uncharacterized protein from Mus musculus (Mouse).